Reading from the N-terminus, the 892-residue chain is DNA mismatch repair protein MutS (892 aa).

607-614 (GPNMSGKS) is a binding site for ATP. Residues 833–855 (EESQLSFFGAEQSSKKQDKPALD) form a disordered region. A compositionally biased stretch (basic and acidic residues) spans 845 to 855 (SSKKQDKPALD).

This sequence belongs to the DNA mismatch repair MutS family.

In terms of biological role, this protein is involved in the repair of mismatches in DNA. It is possible that it carries out the mismatch recognition step. This protein has a weak ATPase activity. The polypeptide is DNA mismatch repair protein MutS (Bacillus anthracis (strain A0248)).